Here is a 235-residue protein sequence, read N- to C-terminus: Large ribosomal subunit protein uL1 (235 aa).

Belongs to the universal ribosomal protein uL1 family. As to quaternary structure, part of the 50S ribosomal subunit.

Its function is as follows. Binds directly to 23S rRNA. The L1 stalk is quite mobile in the ribosome, and is involved in E site tRNA release. In terms of biological role, protein L1 is also a translational repressor protein, it controls the translation of the L11 operon by binding to its mRNA. This Methylibium petroleiphilum (strain ATCC BAA-1232 / LMG 22953 / PM1) protein is Large ribosomal subunit protein uL1.